The chain runs to 340 residues: tRNA N6-adenosine threonylcarbamoyltransferase (340 aa).

Fe cation-binding residues include His-111 and His-115. Residues 134–138 (LVSGG), Asp-167, Gly-180, and Asn-272 each bind substrate. Asp-300 provides a ligand contact to Fe cation.

It belongs to the KAE1 / TsaD family. The cofactor is Fe(2+).

Its subcellular location is the cytoplasm. The catalysed reaction is L-threonylcarbamoyladenylate + adenosine(37) in tRNA = N(6)-L-threonylcarbamoyladenosine(37) in tRNA + AMP + H(+). In terms of biological role, required for the formation of a threonylcarbamoyl group on adenosine at position 37 (t(6)A37) in tRNAs that read codons beginning with adenine. Is involved in the transfer of the threonylcarbamoyl moiety of threonylcarbamoyl-AMP (TC-AMP) to the N6 group of A37, together with TsaE and TsaB. TsaD likely plays a direct catalytic role in this reaction. This is tRNA N6-adenosine threonylcarbamoyltransferase from Proteus mirabilis (strain HI4320).